Reading from the N-terminus, the 228-residue chain is 7-cyano-7-deazaguanine synthase (228 aa).

9–19 contacts ATP; the sequence is LSGGPDSTTVL. Zn(2+) contacts are provided by cysteine 193, cysteine 203, cysteine 206, and cysteine 209.

This sequence belongs to the QueC family. Requires Zn(2+) as cofactor.

The enzyme catalyses 7-carboxy-7-deazaguanine + NH4(+) + ATP = 7-cyano-7-deazaguanine + ADP + phosphate + H2O + H(+). Its pathway is purine metabolism; 7-cyano-7-deazaguanine biosynthesis. Functionally, catalyzes the ATP-dependent conversion of 7-carboxy-7-deazaguanine (CDG) to 7-cyano-7-deazaguanine (preQ(0)). This Rickettsia massiliae (strain Mtu5) protein is 7-cyano-7-deazaguanine synthase.